The chain runs to 414 residues: Glutamyl-tRNA reductase (414 aa).

Substrate-binding positions include 49-52, Ser-108, 113-115, and Gln-119; these read TCNR and EPQ. Cys-50 (nucleophile) is an active-site residue. NADP(+) is bound at residue 188-193; sequence GAGQTG.

This sequence belongs to the glutamyl-tRNA reductase family. Homodimer.

The catalysed reaction is (S)-4-amino-5-oxopentanoate + tRNA(Glu) + NADP(+) = L-glutamyl-tRNA(Glu) + NADPH + H(+). It participates in porphyrin-containing compound metabolism; protoporphyrin-IX biosynthesis; 5-aminolevulinate from L-glutamyl-tRNA(Glu): step 1/2. In terms of biological role, catalyzes the NADPH-dependent reduction of glutamyl-tRNA(Glu) to glutamate 1-semialdehyde (GSA). The polypeptide is Glutamyl-tRNA reductase (Francisella philomiragia subsp. philomiragia (strain ATCC 25017 / CCUG 19701 / FSC 153 / O#319-036)).